A 628-amino-acid polypeptide reads, in one-letter code: (-)-beta-pinene synthase 1, chloroplastic (628 aa).

Residues 1–51 (MDLISVLPSASKSCVCLHKPLSSSTHKLKPFCRTIRILGMPRPRKSVLMVS) constitute a chloroplast transit peptide. Positions 379, 383, and 531 each coordinate Mg(2+). The short motif at 379–383 (DDMYD) is the DDXXD motif element.

It belongs to the terpene synthase family. Tpsd subfamily. Requires Mg(2+) as cofactor. Mn(2+) serves as cofactor.

It is found in the plastid. It localises to the chloroplast. The catalysed reaction is (2E)-geranyl diphosphate = (1S,5S)-beta-pinene + diphosphate. It catalyses the reaction (2E)-geranyl diphosphate = (1S,5S)-alpha-pinene + diphosphate. Its pathway is terpene metabolism; oleoresin biosynthesis. It participates in secondary metabolite biosynthesis; terpenoid biosynthesis. In terms of biological role, monoterpene synthase (TPS) involved in the biosynthesis of monoterpene natural products included in conifer oleoresin secretions and volatile emissions; these compounds contribute to biotic and abiotic stress defense against herbivores and pathogens. Catalyzes the conversion of (2E)-geranyl diphosphate (GPP) to (-)-beta-pinene and, to a lower extent, to (-)-alpha-pinene. The sequence is that of (-)-beta-pinene synthase 1, chloroplastic from Pinus banksiana (Jack pine).